Here is a 154-residue protein sequence, read N- to C-terminus: Protein X (154 aa).

The segment at 68 to 117 (PCALRFTSARRMETTVNAHQILPKVLHKRTLGLSAMSTTDLEAYFKACLF) is mitochondrial targeting sequence.

This sequence belongs to the orthohepadnavirus protein X family. As to quaternary structure, may form homodimer. May interact with host CEBPA, CFLAR, CREB1, DDB1, E4F1, HBXIP, HSPD1/HSP60, NFKBIA, POLR2E and SMAD4. Interacts with host SMC5-SMC6 complex and induces its degradation. Interacts with host TRPC4AP; leading to prevent ubiquitination of TRPC4AP. Interacts with host PLSCR1; this interaction promotes ubiquitination and degradation of HBx and impairs HBx-mediated cell proliferation. Post-translationally, a fraction may be phosphorylated in insect cells and HepG2 cells, a human hepatoblastoma cell line. Phosphorylated in vitro by host protein kinase C or mitogen-activated protein kinase. N-acetylated in insect cells.

The protein localises to the host cytoplasm. It is found in the host nucleus. Its subcellular location is the host mitochondrion. In terms of biological role, multifunctional protein that plays a role in silencing host antiviral defenses and promoting viral transcription. Does not seem to be essential for HBV infection. May be directly involved in development of cirrhosis and liver cancer (hepatocellular carcinoma). Most of cytosolic activities involve modulation of cytosolic calcium. The effect on apoptosis is controversial depending on the cell types in which the studies have been conducted. May induce apoptosis by localizing in mitochondria and causing loss of mitochondrial membrane potential. May also modulate apoptosis by binding host CFLAR, a key regulator of the death-inducing signaling complex (DISC). Promotes viral transcription by using the host E3 ubiquitin ligase DDB1 to target the SMC5-SMC6 complex to proteasomal degradation. This host complex would otherwise bind to viral episomal DNA, and prevents its transcription. Moderately stimulates transcription of many different viral and cellular transcription elements. Promoters and enhancers stimulated by HBx contain DNA binding sites for NF-kappa-B, AP-1, AP-2, c-EBP, ATF/CREB, or the calcium-activated factor NF-AT. This is Protein X from Hepatitis B virus genotype E (isolate Cote d'Ivoire/ABI-129/2003) (HBV-E).